The primary structure comprises 344 residues: N-acetyl-gamma-glutamyl-phosphate reductase (344 aa).

Cys-150 is an active-site residue.

This sequence belongs to the NAGSA dehydrogenase family. Type 1 subfamily.

The protein resides in the cytoplasm. It carries out the reaction N-acetyl-L-glutamate 5-semialdehyde + phosphate + NADP(+) = N-acetyl-L-glutamyl 5-phosphate + NADPH + H(+). Its pathway is amino-acid biosynthesis; L-arginine biosynthesis; N(2)-acetyl-L-ornithine from L-glutamate: step 3/4. Catalyzes the NADPH-dependent reduction of N-acetyl-5-glutamyl phosphate to yield N-acetyl-L-glutamate 5-semialdehyde. This is N-acetyl-gamma-glutamyl-phosphate reductase from Pseudomonas putida (strain ATCC 700007 / DSM 6899 / JCM 31910 / BCRC 17059 / LMG 24140 / F1).